The chain runs to 424 residues: MAMVVSSWRDPQDDVAGGNPGGPNPAAQAARGGGGGAGEQQQQQAGSGAPHTPQTPGQPGAPATPGTAGDKGQGPPGSGQSQQHIECVVCGDKSSGKHYGQFTCEGCKSFFKRSVRRNLTYTCRANRNCPIDQHHRNQCQYCRLKKCLKVGMRREAVQRGRMPPTQPNPGQYALTNGDPLNGHCYLSGYISLLLRAEPYPTSRYGSQCMQPNNIMGIENICELAARLLFSAVEWARNIPFFPDLQITDQVSLLRLTWSELFVLNAAQCSMPLHVAPLLAAAGLHASPMSADRVVAFMDHIRIFQEQVEKLKALHVDSAEYSCLKAIVLFTSDACGLSDAAHIESLQEKSQCALEEYVRSQYPNQPSRFGKLLLRLPSLRTVSSSVIEQLFFVRLVGKTPIETLIRDMLLSGSSFNWPYMSIQCS.

The interval M1 to Q82 is disordered. The segment covering E39 to A68 has biased composition (low complexity). Positions H84–R159 form a DNA-binding region, nuclear receptor. 2 consecutive NR C4-type zinc fingers follow at residues C87–C107 and C123–C147. One can recognise an NR LBD domain in the interval Y185–G411.

The protein belongs to the nuclear hormone receptor family. NR2 subfamily. In terms of assembly, binds DNA as dimer; homodimer and probable heterodimer with NR2F6. Interacts with GTF2B; this interaction is direct. Interacts with COPS2.

Its subcellular location is the nucleus. Its function is as follows. Coup (chicken ovalbumin upstream promoter) transcription factor binds to the ovalbumin promoter and, in conjunction with another protein (S300-II) stimulates initiation of transcription. Binds to both direct repeats and palindromes of the 5'-AGGTCA-3' motif. Represses transcriptional activity of LHCG. In Bos taurus (Bovine), this protein is COUP transcription factor 1 (NR2F1).